A 340-amino-acid polypeptide reads, in one-letter code: Phospho-N-acetylmuramoyl-pentapeptide-transferase (340 aa).

9 helical membrane passes run 24–44, 69–89, 95–115, 129–149, 156–176, 196–216, 235–255, 260–280, and 316–336; these read VPFGLSVLGSALLGSLLLPVL, TMGGLSFLPVGLLVAGIGSGW, AVALLTLAYTVVGWLDDWLVI, LLLQVGIGLVFCGYLAWQGIP, GIGALPLGWLFWPLALFVLVG, ALVLAGLGLTAADPVLALVAF, LFMGDTGSLGLGGALAGLALL, WALAWMGAVLVAEALSVILQV, and VVGCFYGLTALLVGLGWAWWH.

This sequence belongs to the glycosyltransferase 4 family. MraY subfamily. The cofactor is Mg(2+).

The protein resides in the cell inner membrane. The catalysed reaction is UDP-N-acetyl-alpha-D-muramoyl-L-alanyl-gamma-D-glutamyl-meso-2,6-diaminopimeloyl-D-alanyl-D-alanine + di-trans,octa-cis-undecaprenyl phosphate = di-trans,octa-cis-undecaprenyl diphospho-N-acetyl-alpha-D-muramoyl-L-alanyl-D-glutamyl-meso-2,6-diaminopimeloyl-D-alanyl-D-alanine + UMP. Its pathway is cell wall biogenesis; peptidoglycan biosynthesis. Its function is as follows. Catalyzes the initial step of the lipid cycle reactions in the biosynthesis of the cell wall peptidoglycan: transfers peptidoglycan precursor phospho-MurNAc-pentapeptide from UDP-MurNAc-pentapeptide onto the lipid carrier undecaprenyl phosphate, yielding undecaprenyl-pyrophosphoryl-MurNAc-pentapeptide, known as lipid I. The sequence is that of Phospho-N-acetylmuramoyl-pentapeptide-transferase from Synechococcus sp. (strain JA-3-3Ab) (Cyanobacteria bacterium Yellowstone A-Prime).